Here is a 319-residue protein sequence, read N- to C-terminus: Thymidylate synthase (319 aa).

DUMP is bound by residues arginine 25 and 181–182; that span reads RR. Catalysis depends on cysteine 201, which acts as the Nucleophile. DUMP-binding positions include 221-224, asparagine 232, and 262-264; these read RSAD and HIY. Aspartate 224 contributes to the (6R)-5,10-methylene-5,6,7,8-tetrahydrofolate binding site. Residue alanine 318 participates in (6R)-5,10-methylene-5,6,7,8-tetrahydrofolate binding.

Belongs to the thymidylate synthase family. Bacterial-type ThyA subfamily. In terms of assembly, homodimer.

The protein localises to the cytoplasm. The catalysed reaction is dUMP + (6R)-5,10-methylene-5,6,7,8-tetrahydrofolate = 7,8-dihydrofolate + dTMP. It participates in pyrimidine metabolism; dTTP biosynthesis. In terms of biological role, catalyzes the reductive methylation of 2'-deoxyuridine-5'-monophosphate (dUMP) to 2'-deoxythymidine-5'-monophosphate (dTMP) while utilizing 5,10-methylenetetrahydrofolate (mTHF) as the methyl donor and reductant in the reaction, yielding dihydrofolate (DHF) as a by-product. This enzymatic reaction provides an intracellular de novo source of dTMP, an essential precursor for DNA biosynthesis. In Oenococcus oeni (strain ATCC BAA-331 / PSU-1), this protein is Thymidylate synthase.